The sequence spans 62 residues: Glucagon (62 aa).

Belongs to the glucagon family.

Its subcellular location is the secreted. Functionally, promotes hydrolysis of glycogen and lipids, and raises the blood sugar level. This chain is Glucagon (gcg), found in Scyliorhinus canicula (Small-spotted catshark).